We begin with the raw amino-acid sequence, 205 residues long: Beta-crystallin B2 (205 aa).

An N-acetylalanine modification is found at Ala2. The segment at 2–16 (ASDHQTQAGKPQPLN) is N-terminal arm. 2 Beta/gamma crystallin 'Greek key' domains span residues 17–56 (PKII…LVQA) and 57–101 (GPWV…RPIK). The connecting peptide stretch occupies residues 102–106 (VDSQE). 2 Beta/gamma crystallin 'Greek key' domains span residues 107–148 (HKII…RVQS) and 149–191 (GTWV…RRIR). Residues 193-205 (MQWHQRGAFHPTN) are C-terminal arm.

This sequence belongs to the beta/gamma-crystallin family. In terms of assembly, homo/heterodimer, or complexes of higher-order. The structure of beta-crystallin oligomers seems to be stabilized through interactions between the N-terminal arms.

Functionally, crystallins are the dominant structural components of the vertebrate eye lens. The chain is Beta-crystallin B2 (CRYBB2) from Oryctolagus cuniculus (Rabbit).